A 369-amino-acid chain; its full sequence is Peptide chain release factor 2 (369 aa).

Q252 is modified (N5-methylglutamine).

Belongs to the prokaryotic/mitochondrial release factor family. Methylated by PrmC. Methylation increases the termination efficiency of RF2.

The protein resides in the cytoplasm. In terms of biological role, peptide chain release factor 2 directs the termination of translation in response to the peptide chain termination codons UGA and UAA. This is Peptide chain release factor 2 from Staphylococcus aureus (strain MRSA252).